A 454-amino-acid chain; its full sequence is Cobyrinate a,c-diamide synthase (454 aa).

Residues 247-442 (KIGIAMDSAF…IHAHWASNPN (196 aa)) form the GATase cobBQ-type domain. The active-site Nucleophile is the C329.

Belongs to the CobB/CbiA family. Mg(2+) serves as cofactor.

It carries out the reaction cob(II)yrinate + 2 L-glutamine + 2 ATP + 2 H2O = cob(II)yrinate a,c diamide + 2 L-glutamate + 2 ADP + 2 phosphate + 2 H(+). The protein operates within cofactor biosynthesis; adenosylcobalamin biosynthesis; cob(II)yrinate a,c-diamide from sirohydrochlorin (anaerobic route): step 10/10. In terms of biological role, catalyzes the ATP-dependent amidation of the two carboxylate groups at positions a and c of cobyrinate, using either L-glutamine or ammonia as the nitrogen source. In Leptospira interrogans serogroup Icterohaemorrhagiae serovar copenhageni (strain Fiocruz L1-130), this protein is Cobyrinate a,c-diamide synthase.